Consider the following 211-residue polypeptide: Probable chemoreceptor glutamine deamidase CheD (211 aa).

This sequence belongs to the CheD family.

It carries out the reaction L-glutaminyl-[protein] + H2O = L-glutamyl-[protein] + NH4(+). Functionally, probably deamidates glutamine residues to glutamate on methyl-accepting chemotaxis receptors (MCPs), playing an important role in chemotaxis. This chain is Probable chemoreceptor glutamine deamidase CheD, found in Hahella chejuensis (strain KCTC 2396).